The primary structure comprises 3184 residues: Cilia and flagella-associated protein 47 (3184 aa).

The Calponin-homology (CH) domain maps to 1729–1851; the sequence is SDSERILLSW…LCVYLYERLP (123 aa). The segment at 2491–2514 is disordered; the sequence is RDEEESQEETDTEKDFSSQETPSD. A compositionally biased stretch (acidic residues) spans 2493–2502; it reads EEESQEETDT.

As to quaternary structure, interacts with CFAP65. Highly expressed in spermatzoa (at protein level).

Its subcellular location is the cytoplasm. The protein localises to the cytoskeleton. The protein resides in the flagellum basal body. Functionally, plays a role in flagellar formation and sperm motility. This chain is Cilia and flagella-associated protein 47, found in Mus musculus (Mouse).